The sequence spans 343 residues: Tetraacyldisaccharide 4'-kinase (343 aa).

Position 65–72 (65–72 (HAGGTGKT)) interacts with ATP.

This sequence belongs to the LpxK family.

The catalysed reaction is a lipid A disaccharide + ATP = a lipid IVA + ADP + H(+). It participates in glycolipid biosynthesis; lipid IV(A) biosynthesis; lipid IV(A) from (3R)-3-hydroxytetradecanoyl-[acyl-carrier-protein] and UDP-N-acetyl-alpha-D-glucosamine: step 6/6. In terms of biological role, transfers the gamma-phosphate of ATP to the 4'-position of a tetraacyldisaccharide 1-phosphate intermediate (termed DS-1-P) to form tetraacyldisaccharide 1,4'-bis-phosphate (lipid IVA). This chain is Tetraacyldisaccharide 4'-kinase, found in Neisseria gonorrhoeae (strain ATCC 700825 / FA 1090).